A 718-amino-acid polypeptide reads, in one-letter code: Neutral ceramidase B (718 aa).

A signal peptide spans 1-20; that stretch reads MINSFKKLIILISLVIILLS. N-linked (GlcNAc...) asparagine glycans are attached at residues asparagine 224 and asparagine 252. The active-site Nucleophile is serine 298. Residues asparagine 358, asparagine 378, asparagine 391, asparagine 421, asparagine 422, asparagine 577, asparagine 610, and asparagine 614 are each glycosylated (N-linked (GlcNAc...) asparagine).

It belongs to the neutral ceramidase family.

It is found in the secreted. The enzyme catalyses an N-acylsphing-4-enine + H2O = sphing-4-enine + a fatty acid. Its function is as follows. Hydrolyzes the sphingolipid ceramide into sphingosine and free fatty acid. This is Neutral ceramidase B (dcd2B) from Dictyostelium discoideum (Social amoeba).